Consider the following 54-residue polypeptide: Ribulose bisphosphate carboxylase large chain (54 aa).

Positions 1–2 (MS) are excised as a propeptide. Pro-3 is modified (N-acetylproline). Lys-14 carries the N6,N6,N6-trimethyllysine modification.

This sequence belongs to the RuBisCO large chain family. Type I subfamily. Heterohexadecamer of 8 large chains and 8 small chains.

The protein resides in the plastid. It localises to the chloroplast. The catalysed reaction is 2 (2R)-3-phosphoglycerate + 2 H(+) = D-ribulose 1,5-bisphosphate + CO2 + H2O. It carries out the reaction D-ribulose 1,5-bisphosphate + O2 = 2-phosphoglycolate + (2R)-3-phosphoglycerate + 2 H(+). RuBisCO catalyzes two reactions: the carboxylation of D-ribulose 1,5-bisphosphate, the primary event in carbon dioxide fixation, as well as the oxidative fragmentation of the pentose substrate in the photorespiration process. Both reactions occur simultaneously and in competition at the same active site. In Magnolia liliiflora (Mulan magnolia), this protein is Ribulose bisphosphate carboxylase large chain (rbcL).